A 263-amino-acid chain; its full sequence is MAVGKNKGLSKGGKKGVKKKIVDPFTRKDWYDVKAPSMFSKRQVGTTLVNRTQGTKIASEGLKGRVFEVSLADLQADTDAERSFRKFRLIAEYVQGRNVLCNFHGMDLTTDKLRWMVKKWQTLIEANIDVKTTDGYVLRVFCIGFTNKDSLSQRKTCYAQHTQVRAIRKKMCEIITRDVTNSELREVVNKLIPDSIAKDIEKACHGIYPLRDVCIRKVKVLKRPRFEISKLMELHGEGGGGKGEAGDKSERPEGYEPPVQESV.

The tract at residues 235-263 (HGEGGGGKGEAGDKSERPEGYEPPVQESV) is disordered. Residues 244 to 254 (EAGDKSERPEG) are compositionally biased toward basic and acidic residues.

This sequence belongs to the eukaryotic ribosomal protein eS1 family. Component of the small ribosomal subunit. Mature ribosomes consist of a small (40S) and a large (60S) subunit. The 40S subunit contains about 33 different proteins and 1 molecule of RNA (18S). The 60S subunit contains about 49 different proteins and 3 molecules of RNA (28S, 5.8S and 5S).

It localises to the cytoplasm. The polypeptide is Small ribosomal subunit protein eS1 (Bombyx mori (Silk moth)).